We begin with the raw amino-acid sequence, 353 residues long: Holliday junction branch migration complex subunit RuvB (353 aa).

Residues 1-183 (MSGEGLVSAA…FGFTAHMDFY (183 aa)) form a large ATPase domain (RuvB-L) region. ATP is bound by residues Leu22, Arg23, Gly64, Lys67, Thr68, Ser69, 130–132 (EDF), Arg173, Tyr183, and Arg220. Thr68 lines the Mg(2+) pocket. Positions 184–254 (DAAELALVLT…VARAALRIYD (71 aa)) are small ATPAse domain (RuvB-S). Residues 257-353 (ALGLDRLDRA…ALFGEDLPAS (97 aa)) are head domain (RuvB-H). The DNA site is built by Arg312 and Arg317.

It belongs to the RuvB family. As to quaternary structure, homohexamer. Forms an RuvA(8)-RuvB(12)-Holliday junction (HJ) complex. HJ DNA is sandwiched between 2 RuvA tetramers; dsDNA enters through RuvA and exits via RuvB. An RuvB hexamer assembles on each DNA strand where it exits the tetramer. Each RuvB hexamer is contacted by two RuvA subunits (via domain III) on 2 adjacent RuvB subunits; this complex drives branch migration. In the full resolvosome a probable DNA-RuvA(4)-RuvB(12)-RuvC(2) complex forms which resolves the HJ.

Its subcellular location is the cytoplasm. It carries out the reaction ATP + H2O = ADP + phosphate + H(+). Functionally, the RuvA-RuvB-RuvC complex processes Holliday junction (HJ) DNA during genetic recombination and DNA repair, while the RuvA-RuvB complex plays an important role in the rescue of blocked DNA replication forks via replication fork reversal (RFR). RuvA specifically binds to HJ cruciform DNA, conferring on it an open structure. The RuvB hexamer acts as an ATP-dependent pump, pulling dsDNA into and through the RuvAB complex. RuvB forms 2 homohexamers on either side of HJ DNA bound by 1 or 2 RuvA tetramers; 4 subunits per hexamer contact DNA at a time. Coordinated motions by a converter formed by DNA-disengaged RuvB subunits stimulates ATP hydrolysis and nucleotide exchange. Immobilization of the converter enables RuvB to convert the ATP-contained energy into a lever motion, pulling 2 nucleotides of DNA out of the RuvA tetramer per ATP hydrolyzed, thus driving DNA branch migration. The RuvB motors rotate together with the DNA substrate, which together with the progressing nucleotide cycle form the mechanistic basis for DNA recombination by continuous HJ branch migration. Branch migration allows RuvC to scan DNA until it finds its consensus sequence, where it cleaves and resolves cruciform DNA. The sequence is that of Holliday junction branch migration complex subunit RuvB from Parafrankia sp. (strain EAN1pec).